Here is a 159-residue protein sequence, read N- to C-terminus: Putative pre-16S rRNA nuclease (159 aa).

This sequence belongs to the YqgF nuclease family.

The protein localises to the cytoplasm. Its function is as follows. Could be a nuclease involved in processing of the 5'-end of pre-16S rRNA. This chain is Putative pre-16S rRNA nuclease, found in Agrobacterium fabrum (strain C58 / ATCC 33970) (Agrobacterium tumefaciens (strain C58)).